Consider the following 401-residue polypeptide: Homoserine O-acetyltransferase (401 aa).

Residues 37-358 (NAVLVCHALT…HGHDAFLVEP (322 aa)) enclose the AB hydrolase-1 domain. S146 (nucleophile) is an active-site residue. R215 serves as a coordination point for substrate. Active-site residues include D318 and H351. Position 352 (D352) interacts with substrate.

Belongs to the AB hydrolase superfamily. MetX family. In terms of assembly, homodimer.

It localises to the cytoplasm. It carries out the reaction L-homoserine + acetyl-CoA = O-acetyl-L-homoserine + CoA. It participates in amino-acid biosynthesis; L-methionine biosynthesis via de novo pathway; O-acetyl-L-homoserine from L-homoserine: step 1/1. Its function is as follows. Transfers an acetyl group from acetyl-CoA to L-homoserine, forming acetyl-L-homoserine. The polypeptide is Homoserine O-acetyltransferase (Natronomonas pharaonis (strain ATCC 35678 / DSM 2160 / CIP 103997 / JCM 8858 / NBRC 14720 / NCIMB 2260 / Gabara) (Halobacterium pharaonis)).